Reading from the N-terminus, the 182-residue chain is Large ribosomal subunit protein uL16 (182 aa).

Belongs to the universal ribosomal protein uL16 family.

The polypeptide is Large ribosomal subunit protein uL16 (Thermococcus onnurineus (strain NA1)).